We begin with the raw amino-acid sequence, 150 residues long: MDTVSIAEFLYTNADLLNQEQFDSWLEQCSNDFSYRITTFSEELGRPMDWMDKDKSGLAHYLQNANNHERYTGRLRRHLAMPRVTKQADSSFEVRTAVAIYVIEMNGETALYGIGSYVDNVMSESSGLRLTSRVVTLDTRRLQFGPHVPI.

It belongs to the bacterial ring-hydroxylating dioxygenase beta subunit family. As to quaternary structure, heterotetramer with a alpha2beta2 structure.

The enzyme catalyses 2-aminobenzenesulfonate + NADH + O2 + 2 H(+) = 2,3-dihydroxybenzenesulfonate + NH4(+) + NAD(+). Its activity is regulated as follows. Inhibited by o-phenanthroline. Its function is as follows. Beta subunit of the oxygenase component of the 2-aminobenzenesulfonate 2,3-dioxygenase system (deaminating) (ABSDOS). Can use 2-aminobenzenesulfonate (ABS), benzenesulfonate (BS), 4-toluenesulfonate (TS), 2-nitrobenzenesulfonate, 3- and 4-aminobenzenesulfonates, 4-chloro- and 4-hydroxybenzenesulfonates and pyridine-3-sulfonate as substrates. No desulfonation of ABS to aminocatechol or aminophenol detected. This Alcaligenes sp protein is 2-aminobenzenesulfonate 2,3-dioxygenase subunit beta.